Here is a 507-residue protein sequence, read N- to C-terminus: ATP synthase subunit alpha, chloroplastic (507 aa).

Position 170-177 (170-177 (GDRQTGKT)) interacts with ATP.

The protein belongs to the ATPase alpha/beta chains family. In terms of assembly, F-type ATPases have 2 components, CF(1) - the catalytic core - and CF(0) - the membrane proton channel. CF(1) has five subunits: alpha(3), beta(3), gamma(1), delta(1), epsilon(1). CF(0) has four main subunits: a, b, b' and c.

The protein resides in the plastid. The protein localises to the chloroplast thylakoid membrane. It catalyses the reaction ATP + H2O + 4 H(+)(in) = ADP + phosphate + 5 H(+)(out). Produces ATP from ADP in the presence of a proton gradient across the membrane. The alpha chain is a regulatory subunit. The polypeptide is ATP synthase subunit alpha, chloroplastic (Lemna minor (Common duckweed)).